The sequence spans 255 residues: Type III pantothenate kinase (255 aa).

6 to 13 (DVGNTNTV) is an ATP binding site. Residues Y100 and 107–110 (GADR) contribute to the substrate site. Residue D109 is the Proton acceptor of the active site. Position 129 (D129) interacts with K(+). T132 contributes to the ATP binding site. Residue T184 participates in substrate binding.

This sequence belongs to the type III pantothenate kinase family. In terms of assembly, homodimer. NH4(+) is required as a cofactor. The cofactor is K(+).

The protein localises to the cytoplasm. The enzyme catalyses (R)-pantothenate + ATP = (R)-4'-phosphopantothenate + ADP + H(+). It functions in the pathway cofactor biosynthesis; coenzyme A biosynthesis; CoA from (R)-pantothenate: step 1/5. Catalyzes the phosphorylation of pantothenate (Pan), the first step in CoA biosynthesis. In Syntrophotalea carbinolica (strain DSM 2380 / NBRC 103641 / GraBd1) (Pelobacter carbinolicus), this protein is Type III pantothenate kinase.